Here is a 101-residue protein sequence, read N- to C-terminus: Large ribosomal subunit protein uL23 (101 aa).

It belongs to the universal ribosomal protein uL23 family. As to quaternary structure, part of the 50S ribosomal subunit. Contacts protein L29, and trigger factor when it is bound to the ribosome.

One of the early assembly proteins it binds 23S rRNA. One of the proteins that surrounds the polypeptide exit tunnel on the outside of the ribosome. Forms the main docking site for trigger factor binding to the ribosome. This is Large ribosomal subunit protein uL23 from Haemophilus ducreyi (strain 35000HP / ATCC 700724).